A 184-amino-acid chain; its full sequence is Elongation factor P (184 aa).

The protein belongs to the elongation factor P family.

The protein resides in the cytoplasm. The protein operates within protein biosynthesis; polypeptide chain elongation. Its function is as follows. Involved in peptide bond synthesis. Stimulates efficient translation and peptide-bond synthesis on native or reconstituted 70S ribosomes in vitro. Probably functions indirectly by altering the affinity of the ribosome for aminoacyl-tRNA, thus increasing their reactivity as acceptors for peptidyl transferase. The sequence is that of Elongation factor P from Mycoplasma mycoides subsp. mycoides SC (strain CCUG 32753 / NCTC 10114 / PG1).